The chain runs to 711 residues: Polyribonucleotide nucleotidyltransferase (711 aa).

Mg(2+)-binding residues include aspartate 486 and aspartate 492. Positions 553 to 612 (PRIHTIKINPDKIKDVIGKGGSVIRALTEETGTTIEIEDDGTVKIAATDGDKAQHAIRRI) constitute a KH domain. Positions 622–690 (GRIYNGKVTR…RQGRVRLSIK (69 aa)) constitute an S1 motif domain. A disordered region spans residues 689–711 (IKEATEQTPSAAAPEAPAAEQGE). Low complexity predominate over residues 694-711 (EQTPSAAAPEAPAAEQGE).

The protein belongs to the polyribonucleotide nucleotidyltransferase family. Component of the RNA degradosome, which is a multiprotein complex involved in RNA processing and mRNA degradation. Mg(2+) is required as a cofactor.

The protein resides in the cytoplasm. It catalyses the reaction RNA(n+1) + phosphate = RNA(n) + a ribonucleoside 5'-diphosphate. In terms of biological role, involved in mRNA degradation. Catalyzes the phosphorolysis of single-stranded polyribonucleotides processively in the 3'- to 5'-direction. This chain is Polyribonucleotide nucleotidyltransferase, found in Klebsiella pneumoniae subsp. pneumoniae (strain ATCC 700721 / MGH 78578).